The sequence spans 301 residues: Probable 5-dehydro-4-deoxyglucarate dehydratase (301 aa).

The protein belongs to the DapA family.

It catalyses the reaction 5-dehydro-4-deoxy-D-glucarate + H(+) = 2,5-dioxopentanoate + CO2 + H2O. It participates in carbohydrate acid metabolism; D-glucarate degradation; 2,5-dioxopentanoate from D-glucarate: step 2/2. This Cereibacter sphaeroides (strain KD131 / KCTC 12085) (Rhodobacter sphaeroides) protein is Probable 5-dehydro-4-deoxyglucarate dehydratase.